The chain runs to 336 residues: tRNA N6-adenosine threonylcarbamoyltransferase (336 aa).

Fe cation contacts are provided by H111 and H115. Substrate contacts are provided by residues 134-138 (LVSGG), D167, G180, and N270. D298 is a Fe cation binding site.

This sequence belongs to the KAE1 / TsaD family. Requires Fe(2+) as cofactor.

It is found in the cytoplasm. The catalysed reaction is L-threonylcarbamoyladenylate + adenosine(37) in tRNA = N(6)-L-threonylcarbamoyladenosine(37) in tRNA + AMP + H(+). In terms of biological role, required for the formation of a threonylcarbamoyl group on adenosine at position 37 (t(6)A37) in tRNAs that read codons beginning with adenine. Is involved in the transfer of the threonylcarbamoyl moiety of threonylcarbamoyl-AMP (TC-AMP) to the N6 group of A37, together with TsaE and TsaB. TsaD likely plays a direct catalytic role in this reaction. This chain is tRNA N6-adenosine threonylcarbamoyltransferase, found in Acinetobacter baumannii (strain SDF).